The sequence spans 926 residues: Vacuolar protein sorting-associated protein 39 homolog (926 aa).

One can recognise a CNH domain in the interval 15 to 306; that stretch reads PVEVTCLAFQ…MTLCSGARGQ (292 aa). The stretch at 590–768 is one CHCR repeat; it reads DETEMARNLN…LFRTLVHPNQ (179 aa).

The protein belongs to the VAM6/VPS39 family. Probable core component of the homotypic fusion and vacuole protein sorting (HOPS) complex consisting of the core class C Vps proteins vps-11, vps-16, vps-18, and which further associates with vps-33.1, vps-39 and vps-41. May interact with lgg-2. Interacts with cuti-1.

Its subcellular location is the cytoplasm. The protein localises to the lysosome membrane. It localises to the late endosome membrane. It is found in the late endosome. The protein resides in the lysosome. Its function is as follows. Plays a role in vesicle-mediated protein trafficking to lysosomal compartments including the endocytic membrane transport and autophagic pathways. Believed to act in part as a component of the putative HOPS endosomal tethering complex which is proposed to be involved in the rab-5-to-rab-7 endosome conversion probably implicating sand-1, and via binding SNAREs and SNARE complexes to mediate tethering and docking events during SNARE-mediated membrane fusion. The HOPS complex is proposed to be recruited to rab-7 on the late endosomal membrane and to regulate late endocytic, phagocytic and autophagic traffic towards lysosomes. Involved in homotypic vesicle fusions between late endosomes and in heterotypic fusions between late endosomes and lysosomes. Required for fusion of endosomes. In association with lgg-2 mediates the tethering of autophagosomes with lysosomes to form autolysosomes. Within the HOPS complex, contributes to the normal development of gut granules in embryonic and adult intestinal cells. The polypeptide is Vacuolar protein sorting-associated protein 39 homolog (Caenorhabditis elegans).